The chain runs to 187 residues: Threonylcarbamoyl-AMP synthase (187 aa).

Positions 4–187 (QSTIAAAITC…DAMNGKVFRG (184 aa)) constitute a YrdC-like domain.

This sequence belongs to the SUA5 family. TsaC subfamily.

The protein localises to the cytoplasm. It carries out the reaction L-threonine + hydrogencarbonate + ATP = L-threonylcarbamoyladenylate + diphosphate + H2O. Required for the formation of a threonylcarbamoyl group on adenosine at position 37 (t(6)A37) in tRNAs that read codons beginning with adenine. Catalyzes the conversion of L-threonine, HCO(3)(-)/CO(2) and ATP to give threonylcarbamoyl-AMP (TC-AMP) as the acyladenylate intermediate, with the release of diphosphate. This Pseudoalteromonas translucida (strain TAC 125) protein is Threonylcarbamoyl-AMP synthase.